The primary structure comprises 147 residues: Hemoglobin subunit beta (147 aa).

Residue Val2 is modified to N-acetylvaline. Residues 3–147 (NLSGDEKNAV…VANALAHRYH (145 aa)) enclose the Globin domain. Phosphoserine is present on Ser45. Lys60 carries the post-translational modification N6-acetyllysine. His64 contacts heme b. At Lys83 the chain carries N6-acetyllysine. Position 93 (His93) interacts with heme b. Cys94 is modified (S-nitrosocysteine).

It belongs to the globin family. As to quaternary structure, heterotetramer of two alpha chains and two beta chains. In terms of tissue distribution, red blood cells.

Involved in oxygen transport from the lung to the various peripheral tissues. The sequence is that of Hemoglobin subunit beta (HBB) from Vicugna pacos (Alpaca).